Here is an 889-residue protein sequence, read N- to C-terminus: Translation initiation factor IF-2 (889 aa).

The segment at 1–299 (MTDNKDDKTL…EKFKRSQMQE (299 aa)) is disordered. Low complexity predominate over residues 61–76 (ITPVAATPAARPAEQR). Positions 77 to 93 (PMPPQPSGRPAPQPQPH) are enriched in pro residues. The span at 116–182 (MEARRRALAE…EAEKTEEKVE (67 aa)) shows a compositional bias: basic and acidic residues. Over residues 196-215 (RPQPGRAAPAATPAAPDGAA) the composition is skewed to low complexity. The span at 220–231 (RGTESEEDERRR) shows a compositional bias: basic and acidic residues. Positions 387-554 (SRPPIVTIMG…AILLQSEILD (168 aa)) constitute a tr-type G domain. The G1 stretch occupies residues 396–403 (GHVDHGKT). 396-403 (GHVDHGKT) lines the GTP pocket. The tract at residues 421–425 (GITQH) is G2. The segment at 442-445 (DTPG) is G3. GTP contacts are provided by residues 442-446 (DTPGH) and 496-499 (NKID). The segment at 496–499 (NKID) is G4. A G5 region spans residues 532–534 (SAK).

It belongs to the TRAFAC class translation factor GTPase superfamily. Classic translation factor GTPase family. IF-2 subfamily.

It is found in the cytoplasm. Its function is as follows. One of the essential components for the initiation of protein synthesis. Protects formylmethionyl-tRNA from spontaneous hydrolysis and promotes its binding to the 30S ribosomal subunits. Also involved in the hydrolysis of GTP during the formation of the 70S ribosomal complex. This is Translation initiation factor IF-2 from Rhizobium meliloti (strain 1021) (Ensifer meliloti).